Here is a 312-residue protein sequence, read N- to C-terminus: tRNA-cytidine(32) 2-sulfurtransferase (312 aa).

Positions 39–44 (SGGKDS) match the PP-loop motif motif. Positions 114, 117, and 205 each coordinate [4Fe-4S] cluster.

It belongs to the TtcA family. In terms of assembly, homodimer. It depends on Mg(2+) as a cofactor. Requires [4Fe-4S] cluster as cofactor.

It is found in the cytoplasm. It catalyses the reaction cytidine(32) in tRNA + S-sulfanyl-L-cysteinyl-[cysteine desulfurase] + AH2 + ATP = 2-thiocytidine(32) in tRNA + L-cysteinyl-[cysteine desulfurase] + A + AMP + diphosphate + H(+). Its pathway is tRNA modification. Functionally, catalyzes the ATP-dependent 2-thiolation of cytidine in position 32 of tRNA, to form 2-thiocytidine (s(2)C32). The sulfur atoms are provided by the cysteine/cysteine desulfurase (IscS) system. This chain is tRNA-cytidine(32) 2-sulfurtransferase, found in Cupriavidus pinatubonensis (strain JMP 134 / LMG 1197) (Cupriavidus necator (strain JMP 134)).